The following is a 211-amino-acid chain: Uridine kinase (211 aa).

12–19 (GGTGSGKT) is an ATP binding site.

It belongs to the uridine kinase family.

It is found in the cytoplasm. It catalyses the reaction uridine + ATP = UMP + ADP + H(+). The enzyme catalyses cytidine + ATP = CMP + ADP + H(+). It participates in pyrimidine metabolism; CTP biosynthesis via salvage pathway; CTP from cytidine: step 1/3. It functions in the pathway pyrimidine metabolism; UMP biosynthesis via salvage pathway; UMP from uridine: step 1/1. The chain is Uridine kinase from Halalkalibacterium halodurans (strain ATCC BAA-125 / DSM 18197 / FERM 7344 / JCM 9153 / C-125) (Bacillus halodurans).